The following is a 140-amino-acid chain: Odorant-binding protein 10 (140 aa).

Residues 1–25 form the signal peptide; the sequence is MTSFRLANLTVFLVLLFCFMRGVHS.

The protein belongs to the PBP/GOBP family. As to expression, high-level expression in female mouth parts, particularly in the proboscis (at protein level). Low-level expression in female antenna (at protein level). Female salivary gland. Female chemosensory organs: antenna, palp and proboscis. Male antenna, wing and maxillary palp. Expressed at higher levels in male tissues compared to female tissues. Not detected in midgut.

The protein resides in the secreted. In terms of biological role, involved in modulation of blood-feeding behavior and capacity in female mosquitoes. Required for normal oviposition. Required for normal fecundity and fertility of female mosquitoes. Required for normal expression of VGA1 gene, which encodes the egg yolk protein vitellogenin-A1. Required for normal female longevity when mosquitoes are maintained on regular sugar meal. (Microbial infection) Facilitates shedding of dengue virus type 2 particles into mosquito saliva. Does not affect dengue virus type 2 replication or infection prevalence in midgut and salivary glands at 14 days after blood feeding. Its function is as follows. (Microbial infection) Facilitates shedding of Zika virus particles into mosquito saliva. Does not affect Zika virus replication or infection prevalence in midgut and salivary glands at 14 days after blood feeding. The chain is Odorant-binding protein 10 from Aedes aegypti (Yellowfever mosquito).